The following is a 386-amino-acid chain: Methionine aminopeptidase 1 (386 aa).

Position 2 is an N-acetylalanine (A2). Residues 6–59 form a C6H2-type zinc finger; the sequence is TRVCETDGCSSEAKLQCPTCIKLGIQGSYFCSQECFKGSWATHKLLHKKAKDEK. Positions 9, 14, 22, 25, 36, 40, 48, and 52 each coordinate Zn(2+). H203 contributes to the a protein binding site. Zn(2+) is bound by residues D220, D231, and H294. Position 301 (H301) interacts with a protein. The Zn(2+) site is built by E327 and E358.

The protein belongs to the peptidase M24A family. Methionine aminopeptidase type 1 subfamily. In terms of assembly, associates with the 60S ribosomal subunit of the 80S translational complex. Zn(2+) serves as cofactor. Requires Co(2+) as cofactor. Mn(2+) is required as a cofactor. It depends on Fe(2+) as a cofactor.

It localises to the cytoplasm. It catalyses the reaction Release of N-terminal amino acids, preferentially methionine, from peptides and arylamides.. In terms of biological role, cotranslationally removes the N-terminal methionine from nascent proteins. The N-terminal methionine is often cleaved when the second residue in the primary sequence is small and uncharged (Met-Ala-, Cys, Gly, Pro, Ser, Thr, or Val). Required for normal progression through the cell cycle. The chain is Methionine aminopeptidase 1 (METAP1) from Homo sapiens (Human).